The following is a 500-amino-acid chain: Gamma-glutamylanilide synthase (500 aa).

A GS beta-grasp domain is found at leucine 32–glycine 136. Residues proline 143–leucine 500 form the GS catalytic domain.

Belongs to the glutamine synthetase family. In terms of assembly, homohexamer.

The catalysed reaction is aniline + L-glutamate + ATP = N(5)-phenyl-L-glutamine + ADP + phosphate. Its function is as follows. Involved in the initial oxidation of aniline to catechol by the release of its amino group. Catalyzes the ATP-dependent ligation of L-glutamate to aniline to yield gamma-glutamylanilide (gamma-GA). AtdA1 has a broad substrate range and is able to convert the following anilines, including chlorinated and methylated forms of aniline: aniline (100%), o-chloroaniline (92%), m-chloroaniline (69%), p-chloroaniline (92%), o-methylaniline (40%), m-methylaniline (27%) and p-methylaniline (45%). The polypeptide is Gamma-glutamylanilide synthase (Acinetobacter sp).